The sequence spans 922 residues: MPHKIGFVVVSSSGHEDGFSARELMIHAPTVSGWRSPKFCQFPQEIVLQMVERCRIRKLQLLAHQYMISSKVEFYISESLPEYLVPYQAERFRRLGYVSLCDNEKTGCKARELKSVYVDAVGQFLKLIFHQTTNKYNVNQVALVAINIIGDPADLGDESNTTCREKLIDHYLGHSPHNPEDPALDGTFAGRSDYISPLDDLAFDMYQDPEVAQIIRRLDERKREAAKKERYDHAKKLKQAIADLQKVGERLGRYEVEKRRAVEKEDYDLAKEKKQQMARYRAQVYEQLELHGLLQGEPEMQRPFALPLQPLASPSSPQHWKAVSSLPRTEELAAEDTCAGPILQEKPLASSPRHSAVDRSPPAAGPAPRSHVEALPYDERPLPVTRKQLEEPSAEPEVREADSDVRRRGVSAEPEPLTEKALREASSAIDTLGEALVAGAYSKMWSCREDALLALYKRLMEMPVGTQKEDLKNMLRASVFLIRRAIKDIVTSVFQASLKLLKMIITQYIPKHKLGKLDTTYCVERAIPLLLARTGDSSARLRVMALNFIQEMALFKEVRSLQLIPSYLVQPLKTNASVHLAMSQVDLLARLLRDLGTEGSGFTVDNVMKFAVSALEHRVYEVRETAVRIILDMYRQHPALTLEHLPPDDSTTRRNLLYKAIFEGFAKIDGRPTEAEGKTQKRVVTKEAEKQKKEETKALQGLSAAPRETQAGVQEKENEAVKLKNQDPQGRKAAPPDTPEIPDNHYLDNLCIFCGERNESFTEEGLDLHYWKHCLMLTRCDHCRQVVEISSLTEHLLTECDKRDGFGKCPRCSEAVPKEELPRHIKTKECNPAKSEKVANRCPLCHENFAPGEEAWKVHLMGSAGCTMNLRKTHILCKAPAPQQGKGPMASKSGTSAPKVGSKIPTPKGGLSKSSSRTHTRR.

A coiled-coil region spans residues 210–277 (EVAQIIRRLD…DLAKEKKQQM (68 aa)). A compositionally biased stretch (low complexity) spans 307 to 318 (PLQPLASPSSPQ). Disordered regions lie at residues 307 to 333 (PLQP…EELA) and 348 to 419 (LASS…PLTE). Over residues 396-407 (PEVREADSDVRR) the composition is skewed to basic and acidic residues. HEAT repeat units follow at residues 526-564 (AIPL…LQLI) and 601-637 (GFTV…YRQH). Basic and acidic residues-rich tracts occupy residues 673-697 (TEAE…EETK) and 714-725 (QEKENEAVKLKN). 2 disordered regions span residues 673 to 741 (TEAE…TPEI) and 880 to 922 (PAPQ…HTRR). Positions 678–705 (KTQKRVVTKEAEKQKKEETKALQGLSAA) form a coiled coil.

In terms of assembly, interacts with CCP110 and CEP97. Interacts with ARMC9, TOGARAM1, CCDC66 and CSPP1. As to expression, expressed predominantly in the brain. Also detected, although at much lower levels, in the heart and the liver. Within the brain, expressed in the cerebral cortex, hippocampus, cerebellum and brainstem.

It is found in the cell projection. Its subcellular location is the cilium. The protein resides in the cytoplasm. The protein localises to the cytoskeleton. It localises to the microtubule organizing center. It is found in the centrosome. Its subcellular location is the centriole. The protein resides in the spindle pole. In terms of biological role, required for ciliogenesis and for structural integrity at the ciliary tip. This is Centrosomal protein of 104 kDa (Cep104) from Rattus norvegicus (Rat).